Consider the following 189-residue polypeptide: GTP cyclohydrolase 1 (189 aa).

3 residues coordinate Zn(2+): Cys76, His79, and Cys149.

It belongs to the GTP cyclohydrolase I family. In terms of assembly, toroid-shaped homodecamer, composed of two pentamers of five dimers.

It carries out the reaction GTP + H2O = 7,8-dihydroneopterin 3'-triphosphate + formate + H(+). It participates in cofactor biosynthesis; 7,8-dihydroneopterin triphosphate biosynthesis; 7,8-dihydroneopterin triphosphate from GTP: step 1/1. This Dehalococcoides mccartyi (strain ATCC BAA-2266 / KCTC 15142 / 195) (Dehalococcoides ethenogenes (strain 195)) protein is GTP cyclohydrolase 1.